The sequence spans 201 residues: Ubiquitin-conjugating enzyme E2 E2 (201 aa).

Residues Met-1–Asp-10 show a composition bias toward basic and acidic residues. The disordered stretch occupies residues Met-1–Thr-55. Residue Ser-2 is modified to N-acetylserine. 4 positions are modified to phosphoserine: Ser-11, Ser-15, Ser-18, and Ser-19. Over residues Gly-21–Ile-45 the composition is skewed to basic and acidic residues. Low complexity predominate over residues Ser-46 to Thr-55. In terms of domain architecture, UBC core spans Thr-55 to Thr-201. Cys-139 serves as the catalytic Glycyl thioester intermediate.

The protein belongs to the ubiquitin-conjugating enzyme family. In terms of processing, autoubiquitinated in vitro.

It carries out the reaction S-ubiquitinyl-[E1 ubiquitin-activating enzyme]-L-cysteine + [E2 ubiquitin-conjugating enzyme]-L-cysteine = [E1 ubiquitin-activating enzyme]-L-cysteine + S-ubiquitinyl-[E2 ubiquitin-conjugating enzyme]-L-cysteine.. Its pathway is protein modification; protein ubiquitination. Its function is as follows. Accepts ubiquitin from the E1 complex and catalyzes its covalent attachment to other proteins. In vitro catalyzes 'Lys-11'- and 'Lys-48'-, as well as 'Lys-63'-linked polyubiquitination. Catalyzes the ISGylation of influenza A virus NS1 protein. This Homo sapiens (Human) protein is Ubiquitin-conjugating enzyme E2 E2.